The sequence spans 326 residues: MAMAALRREGRRLAAAPFTSPTPLNALRSSLVSPSEEIGLSGVRSISTQVVRNRMKSVKNIQKITKAMKMVAASKLRAIQTRAENSRGLWQPFTALLGDTPSVDVKKNVIITISSDKGLCGGINSTSVKTSRNIHKLNSGPEKENKYVILGEKAKAQLVRDSKKDIELIITELQKNPLNYTQVSVVADDILKNVEFDALRIVFNKFQSVVSFVPTMSTVLSPEVVERESESGGKLGDLDSYEIEGAESKSEVLQNLTEFQFSSVLFNAVLENACSEQGARMSAMDSSSRNAGEMLDRLTLTYNRTRQASITTELIEIISGASALEG.

Residues 1–45 constitute a mitochondrion transit peptide; sequence MAMAALRREGRRLAAAPFTSPTPLNALRSSLVSPSEEIGLSGVRS.

Belongs to the ATPase gamma chain family. In terms of assembly, F-type ATPases have 2 components, CF(1) - the catalytic core - and CF(0) - the membrane proton channel. CF(1) has five subunits: alpha(3), beta(3), gamma(1), delta(1), epsilon(1). CF(0) has three main subunits: a, b and c.

It is found in the mitochondrion. Its subcellular location is the mitochondrion inner membrane. Its function is as follows. Mitochondrial membrane ATP synthase (F(1)F(0) ATP synthase or Complex V) produces ATP from ADP in the presence of a proton gradient across the membrane which is generated by electron transport complexes of the respiratory chain. F-type ATPases consist of two structural domains, F(1) - containing the extramembraneous catalytic core, and F(0) - containing the membrane proton channel, linked together by a central stalk and a peripheral stalk. During catalysis, ATP synthesis in the catalytic domain of F(1) is coupled via a rotary mechanism of the central stalk subunits to proton translocation. Part of the complex F(1) domain and the central stalk which is part of the complex rotary element. The gamma subunit protrudes into the catalytic domain formed of alpha(3)beta(3). Rotation of the central stalk against the surrounding alpha(3)beta(3) subunits leads to hydrolysis of ATP in three separate catalytic sites on the beta subunits. The sequence is that of ATP synthase subunit gamma, mitochondrial (ATPC) from Ipomoea batatas (Sweet potato).